We begin with the raw amino-acid sequence, 473 residues long: Myocyte-specific enhancer factor 2C (473 aa).

In terms of domain architecture, MADS-box spans 1 to 61 (MGRKKIQITR…NKLFQYASTD (61 aa)). The residue at position 4 (lysine 4) is an N6-acetyllysine. Residues 58–86 (ASTDMDKVLLKYTEYNEPHESRTNSDIVE) constitute a DNA-binding region (mef2-type). Phosphoserine; by CK2 is present on serine 59. Residues 91 to 116 (KGLNGCDSPDPDADDSVGHSPESEDK) are disordered. A phosphoserine mark is found at serine 98, serine 106, and serine 110. Lysine 116 and lysine 119 each carry N6-acetyllysine. The interval 180 to 206 (NSMSPGVTHRPPSAGNTGGLMGGDLTS) is disordered. A phosphoserine mark is found at serine 222 and serine 228. 2 positions are modified to N6-acetyllysine: lysine 234 and lysine 239. At serine 240 the chain carries Phosphoserine. Lysine 252 and lysine 264 each carry N6-acetyllysine. The interval 271-278 (SEDVDLLL) is beta domain. 2 positions are modified to phosphothreonine; by MAPK14: threonine 293 and threonine 300. Positions 368–399 (ACTSTHLSQSSNLSLPSTQSLNIKSEPVSPPR) are transcription repressor. Residues 375–390 (SQSSNLSLPSTQSLNI) show a composition bias toward polar residues. Residues 375–473 (SQSSNLSLPS…RMRLSEGWAT (99 aa)) are disordered. A Glycyl lysine isopeptide (Lys-Gly) (interchain with G-Cter in SUMO) cross-link involves residue lysine 391. Serine 396 is subject to Phosphoserine; by CDK5. Serine 419 is subject to Phosphoserine; by MAPK7. A compositionally biased stretch (low complexity) spans 419–432 (SPVDSLSSCSSSYD). Positions 433–443 (GSDREDHRNEF) are enriched in basic and acidic residues. Serine 445 carries the phosphoserine modification.

It belongs to the MEF2 family. Forms a complex with class II HDACs in undifferentiating cells. On myogenic differentiation, HDACs are released into the cytoplasm allowing MEF2s to interact with other proteins for activation. Interacts with EP300 in differentiating cells; the interaction acetylates MEF2C leading to increased DNA binding and activation. Interacts with HDAC7 and CARM1. Interacts with HDAC4 and HDAC9; the interaction with HDACs represses transcriptional activity. Interacts with LPIN1. Interacts with MYOCD. Interacts with AKAP13. Interacts with FOXK1; the interaction inhibits MEF2C transactivation activity. Interacts (via N-terminus) with HABP4; this interaction decreases DNA-binding activity of MEF2C in myocardial cells in response to mechanical stress. Interacts with JPH2; interaction specifically takes place with the Junctophilin-2 N-terminal fragment cleavage product of JPH2. Interacts (via MADS box) with SOX18. Interacts with PHF7; the interaction promotes MEF2C binding to its transcription targets. In terms of processing, phosphorylated on Ser-59; which enhances DNA binding activity. Phosphorylated on Ser-396; which is required for Lys-391 sumoylation and inhibits transcriptional activity. Post-translationally, acetylated by p300 on several sites in diffentiating myocytes. Acetylation on Lys-4 increases DNA binding and transactivation. Sumoylated on Lys-391 with SUMO2 but not SUMO1; which represses transcriptional activity. In terms of processing, proteolytically cleaved in cerebellar granule neurons on several sites by caspase 3 and caspase 7 following neurotoxicity. Preferentially cleaves the CDK5-mediated hyperphosphorylated form which leads to neuron apoptosis and transcriptional inactivation. In terms of tissue distribution, expressed in the heart. Expressed in cardiac myocytes (at protein level).

Its subcellular location is the nucleus. The protein resides in the cytoplasm. It is found in the sarcoplasm. Transcription activator which binds specifically to the MEF2 element present in the regulatory regions of many muscle-specific genes. Controls cardiac morphogenesis and myogenesis, and is also involved in vascular development. Enhances transcriptional activation mediated by SOX18. Plays an essential role in hippocampal-dependent learning and memory by suppressing the number of excitatory synapses and thus regulating basal and evoked synaptic transmission. Crucial for normal neuronal development, distribution, and electrical activity in the neocortex. Necessary for proper development of megakaryocytes and platelets and for bone marrow B-lymphopoiesis. Required for B-cell survival and proliferation in response to BCR stimulation, efficient IgG1 antibody responses to T-cell-dependent antigens and for normal induction of germinal center B-cells. May also be involved in neurogenesis and in the development of cortical architecture. This Rattus norvegicus (Rat) protein is Myocyte-specific enhancer factor 2C.